Reading from the N-terminus, the 739-residue chain is Protein NPGR2 (739 aa).

The disordered stretch occupies residues 32-71 (EQMRHREEEDKKSEVGVGRDYNGSSALSTAESENAKKLDN). The segment covering 33–45 (QMRHREEEDKKSE) has biased composition (basic and acidic residues). Positions 53–63 (NGSSALSTAES) are enriched in polar residues. 9 TPR repeats span residues 90–127 (EEAR…KMKT), 162–195 (FEAI…VETS), 215–248 (TKAV…HWKL), 465–498 (PRVV…GAES), 500–533 (LEVW…TGKW), 536–569 (GKLL…LQVQ), 592–625 (LGTW…APYS), 626–659 (SVRY…DPMH), and 697–733 (HSAW…EETM).

As to quaternary structure, interacts with calmodulin in a calcium-dependent manner. Expressed in pollen, flowers and fruits.

The chain is Protein NPGR2 from Arabidopsis thaliana (Mouse-ear cress).